The following is a 67-amino-acid chain: UPF0337 protein BCE_3655 (67 aa).

Belongs to the UPF0337 (CsbD) family.

The sequence is that of UPF0337 protein BCE_3655 from Bacillus cereus (strain ATCC 10987 / NRS 248).